The sequence spans 302 residues: UDP-N-acetylenolpyruvoylglucosamine reductase (302 aa).

Residues 23-188 (KVGGNAEIFF…LKAVFKVNKG (166 aa)) form the FAD-binding PCMH-type domain. The active site involves Arg168. The Proton donor role is filled by Ser217. Glu287 is an active-site residue.

This sequence belongs to the MurB family. FAD is required as a cofactor.

It is found in the cytoplasm. It catalyses the reaction UDP-N-acetyl-alpha-D-muramate + NADP(+) = UDP-N-acetyl-3-O-(1-carboxyvinyl)-alpha-D-glucosamine + NADPH + H(+). It functions in the pathway cell wall biogenesis; peptidoglycan biosynthesis. Its function is as follows. Cell wall formation. In Rickettsia bellii (strain RML369-C), this protein is UDP-N-acetylenolpyruvoylglucosamine reductase.